The sequence spans 418 residues: Delta(14)-sterol reductase TM7SF2 (418 aa).

6 consecutive transmembrane segments (helical) span residues 13–35, 62–81, 102–124, 129–148, 255–277, and 287–304; these read FGGPLGVAALLILLPATMFHLLL, ALLLLFIWLGLQVALYLLPA, GFQALVLTALLMGLGVSVGLPLG, MLLPLAFATTLTSFIFSLLL, FGFMLVFGDLAWVPFTYSLQAQF, and LPMALLICLLKVIGYYIF. NADP(+)-binding positions include Lys-311, Arg-315, Leu-338, Trp-343, and 350–351; that span reads NY. A helical transmembrane segment spans residues 355 to 377; it reads LIMALAWSLPCGLSHLLPYFYVL. NADP(+) contacts are provided by residues Asp-390, 394 to 398, and Tyr-405; that span reads CLQKY.

It belongs to the ERG4/ERG24 family. In terms of tissue distribution, strongly expressed in liver, weaker in ovary, testis, kidney and brain.

The protein resides in the endoplasmic reticulum membrane. Its subcellular location is the microsome membrane. The catalysed reaction is 4,4-dimethyl-5alpha-cholesta-8,24-dien-3beta-ol + NADP(+) = 4,4-dimethyl-5alpha-cholesta-8,14,24-trien-3beta-ol + NADPH + H(+). The enzyme catalyses 5alpha-cholest-8,14-dien-3beta-ol + NADPH + H(+) = 5alpha-cholest-8-en-3beta-ol + NADP(+). It carries out the reaction 4,4-dimethyl-8,14-cholestadien-3beta-ol + NADPH + H(+) = 4,4-dimethyl-5alpha-cholest-8-en-3beta-ol + NADP(+). The protein operates within steroid biosynthesis; cholesterol biosynthesis. In terms of biological role, catalyzes the reduction of the C14-unsaturated bond of lanosterol, as part of the metabolic pathway leading to cholesterol biosynthesis. The polypeptide is Delta(14)-sterol reductase TM7SF2 (Tm7sf2) (Mus musculus (Mouse)).